The chain runs to 355 residues: Guanine nucleotide-binding protein alpha-12 subunit (355 aa).

Residues 28–355 enclose the G-alpha domain; the sequence is RQINLLLLGS…EQNLKTLMMQ (328 aa). The interval 31-44 is G1 motif; sequence NLLLLGSGESGKST. GTP is bound by residues 36 to 43, 176 to 182, 201 to 205, 270 to 273, and alanine 327; these read GSGESGKS, LFCRKAT, DVGGQ, and NKND. Serine 43 and threonine 182 together coordinate Mg(2+). Residues 174-182 form a G2 motif region; the sequence is DILFCRKAT. The tract at residues 197-206 is G3 motif; sequence FRFIDVGGQR. The interval 266 to 273 is G4 motif; sequence ILFMNKND. A G5 motif region spans residues 325 to 330; that stretch reads TTAVDT.

It belongs to the G-alpha family. In terms of assembly, g proteins are composed of 3 units; alpha, beta and gamma. The alpha chain contains the guanine nucleotide binding site.

In terms of biological role, guanine nucleotide-binding proteins (G proteins) are involved as modulators or transducers in various transmembrane signaling systems. May play a role in resistance to fungal infection in the epidermis by regulating the up-regulation of several antimicrobial peptides of the NLP and CNC families. Upstream of plc-3, tpa-1 and the p38-like pathway, required for the expression of antimicrobial peptide nlp-29 in the epidermis in response to fungal infection or physical injury. This is Guanine nucleotide-binding protein alpha-12 subunit (gpa-12) from Caenorhabditis elegans.